We begin with the raw amino-acid sequence, 986 residues long: MGSTSNSTKNTGSTTTTTTTAAPATTAKHSNSAPTRPSVHYYSSTGDIEKLSNLLNNSATSPDTPDSEKRTPLHHAAFCGSAACVNFLLDKKANANIKDSAGNTPLQWASSRGHLECIKLLVEKGGVDVNTKDDKNGTPLHKASLFASAECVLYLLNGKADPRAVTTNGETPLHHASAGGNPQCVELLIKADSKVNAVDNDCITPLHQASFSGHSSCVSLLLKKGAKVDPRDIHGISPLHNAASAGYVDCVEQLVRNGENINCVDIEGVTPLHHTCFNGNLQLTKRLIELGAKINMVDEMGETPLHKAAFNGHKEVCEYLLYLDPTMIDCRDSRQSTSLHLAAFNGLLDMVDLLIRYKAQINIKDEEGATPLHKASFNGHSSCAKLLVDKGAPICIVDSQGATPLHKAAFNGRSKCLATLIRSGAELEVKDSQGGTPLHNAAYNGHSDCCRILLKKGANVNAVDTHSSTPLHLASAAGARDTVDVLIQFKARIDAKNFAGKTPLVYAIKKNHSDVARVLIRAGADLDQVSLRSSVDFTKTFGTENHDEIYQIVNKRESSNHEVDELQLALEQQAKEDMEQLAAEKQKLLLIKAAIAQFNSHPKKGIEFIVANGVISEKNPKEVAHFLLTHSELSKQSIGEYIGEGDDFNLQVLHAFVDELNFFGLDFDVALRKYLLTFRLPGEAQKIDRMMEKFASQFYQHNPENKVFVNQDAVYVLAFSVIMLNTDAHNPNIKKKMTKAEFLRNNSGINSGDDLPPDFMENLYDKIVTNEIKMERDGNQANQHVEKKGWLTKQGGRIKTWKKRWFILTANCLLYYKTPQDHEPCGIIPLENVVVTIDPQKKFCFMLHSSQEQMKACKLNSDGTLVQANHAAYFIAAANMAEMDSWVQSIKSNIHSNPNFEQLLKRKAETIRGRGKVSTKPIQNRKQTISGPPPSTTTTTTSTASNNVTSVGSPPNSGSVLNSSGSKPVTFSSTSSPVQQQTSALS.

Positions 1–28 (MGSTSNSTKNTGSTTTTTTTAAPATTAK) are enriched in low complexity. The disordered stretch occupies residues 1 to 43 (MGSTSNSTKNTGSTTTTTTTAAPATTAKHSNSAPTRPSVHYYS). A compositionally biased stretch (polar residues) spans 29–43 (HSNSAPTRPSVHYYS). 15 ANK repeats span residues 34–63 (PTRP…TSPD), 68–97 (EKRT…NANI), 101–131 (AGNT…DVNT), 135–164 (KNGT…DPRA), 168–197 (NGET…KVNA), 201–230 (DCIT…KVDP), 234–263 (HGIS…NINC), 267–296 (EGVT…KINM), 300–329 (MGET…TMID), 334–363 (RQST…QINI), 367–396 (EGAT…PICI), 400–429 (QGAT…ELEV), 433–462 (QGGT…NVNA), 466–495 (HSST…RIDA), and 499–528 (AGKT…DLDQ). An SEC7 domain is found at 580–770 (QLAAEKQKLL…ENLYDKIVTN (191 aa)). The PH domain occupies 784–895 (HVEKKGWLTK…WVQSIKSNIH (112 aa)). The disordered stretch occupies residues 911–986 (IRGRGKVSTK…PVQQQTSALS (76 aa)). Polar residues predominate over residues 920-929 (KPIQNRKQTI). 2 stretches are compositionally biased toward low complexity: residues 936-953 (TTTT…SVGS) and 963-986 (SSGS…SALS).

In Dictyostelium discoideum (Social amoeba), this protein is Ankyrin repeat, PH and SEC7 domain containing protein secG (secG).